A 238-amino-acid chain; its full sequence is Phosphoribosylaminoimidazole-succinocarboxamide synthase (238 aa).

Belongs to the SAICAR synthetase family.

It catalyses the reaction 5-amino-1-(5-phospho-D-ribosyl)imidazole-4-carboxylate + L-aspartate + ATP = (2S)-2-[5-amino-1-(5-phospho-beta-D-ribosyl)imidazole-4-carboxamido]succinate + ADP + phosphate + 2 H(+). The protein operates within purine metabolism; IMP biosynthesis via de novo pathway; 5-amino-1-(5-phospho-D-ribosyl)imidazole-4-carboxamide from 5-amino-1-(5-phospho-D-ribosyl)imidazole-4-carboxylate: step 1/2. This Nitrosococcus oceani (strain ATCC 19707 / BCRC 17464 / JCM 30415 / NCIMB 11848 / C-107) protein is Phosphoribosylaminoimidazole-succinocarboxamide synthase.